Reading from the N-terminus, the 356-residue chain is Carbohydrate sulfotransferase 10 (356 aa).

Topologically, residues 1-6 (MHHQWL) are cytoplasmic. A helical; Signal-anchor for type II membrane protein transmembrane segment spans residues 7-27 (LLAACFWVIFMFMVASKFITL). Residues 28–356 (TFKDPDVYSA…GYQKPDFLLN (329 aa)) lie on the Lumenal side of the membrane. N-linked (GlcNAc...) asparagine glycosylation is present at Asn99. 3'-phosphoadenylyl sulfate-binding positions include 127-133 (PKVGNTQ) and 189-197 (RDPFERLIS). 2 N-linked (GlcNAc...) asparagine glycosylation sites follow: Asn228 and Asn316.

This sequence belongs to the sulfotransferase 2 family.

It localises to the golgi apparatus membrane. It catalyses the reaction 3-O-{beta-D-GlcA-(1-&gt;[3)-alpha-D-Xyl-(1-&gt;3)-beta-D-GlcA-(1-&gt;](n)-4)-beta-D-Xyl-(1-&gt;4)-Rib-ol-P-Rib-ol-P-3-beta-D-GalNAc-(1-&gt;3)-beta-D-GlcNAc-(1-&gt;4)-O-6-P-alpha-D-Man}-L-Thr-[protein] + 3'-phosphoadenylyl sulfate = 3-O-{O-3-S-beta-D-GlcA-(1-&gt;[3)-alpha-D-Xyl-(1-&gt;3)-beta-D-GlcA-(1-&gt;](n)-4)-beta-D-Xyl-(1-&gt;4)-Rib-ol-P-Rib-ol-P-3-beta-D-GalNAc-(1-&gt;3)-beta-D-GlcNAc-(1-&gt;4)-O-6-P-alpha-D-Man}-L-Thr-[protein] + adenosine 3',5'-bisphosphate + H(+). It carries out the reaction 17beta-estradiol 3-O-(beta-D-glucuronate) + 3'-phosphoadenylyl sulfate = 17beta-estradiol 3-O-(3-sulfo-beta-D-glucuronate) + adenosine 3',5'-bisphosphate + H(+). The catalysed reaction is 17beta-estradiol 3-O-(beta-D-glucuronate) 17-sulfate + 3'-phosphoadenylyl sulfate = 17beta-estradiol 3-O-(3-sulfo-beta-D-glucuronate) 17-sulfate + adenosine 3',5'-bisphosphate + H(+). The enzyme catalyses 17beta-estradiol 17-O-(beta-D-glucuronate) + 3'-phosphoadenylyl sulfate = 17beta-estradiol 17-O-(3-sulfo-beta-D-glucuronate) + adenosine 3',5'-bisphosphate + H(+). It catalyses the reaction 16alpha,17beta-estriol 3-O-(beta-D-glucuronate) + 3'-phosphoadenylyl sulfate = 16alpha,17beta-estriol 3-O-(3-sulfo-beta-D-glucuronate) + adenosine 3',5'-bisphosphate + H(+). It carries out the reaction 16alpha,17beta-estriol 16-O-(beta-D-glucuronate) + 3'-phosphoadenylyl sulfate = 16alpha,17beta-estriol 16-O-(3-sulfo-beta-D-glucuronate) + adenosine 3',5'-bisphosphate + H(+). The catalysed reaction is 16alpha,17beta-estriol 17-O-(beta-D-glucuronate) + 3'-phosphoadenylyl sulfate = 16alpha,17beta-estriol 17-O-(3-sulfo-beta-D-glucuronate) + adenosine 3',5'-bisphosphate + H(+). The enzyme catalyses estrone 3-O-(beta-D-glucuronate) + 3'-phosphoadenylyl sulfate = estrone 3-O-(3-sulfo-beta-D-glucuronate) + adenosine 3',5'-bisphosphate + H(+). It catalyses the reaction 3alpha,20alpha-dihydroxy-5beta-pregnane 3-O-(beta-D-glucuronate) + 3'-phosphoadenylyl sulfate = 3alpha,20alpha-dihydroxy-5beta-pregnane 3-O-(3-sulfo-beta-D-glucuronate) + adenosine 3',5'-bisphosphate + H(+). It carries out the reaction testosterone 17-O-(beta-D-glucuronate) + 3'-phosphoadenylyl sulfate = testosterone 17-O-(3-sulfo-beta-D-glucuronate) + adenosine 3',5'-bisphosphate + H(+). The catalysed reaction is 3beta-androst-5-en-17-one 3-O-(beta-D-glucuronate) + 3'-phosphoadenylyl sulfate = 3beta-androst-5-en-17-one 3-O-(3-sulfo-beta-D-glucuronate) + adenosine 3',5'-bisphosphate + H(+). The enzyme catalyses 3alpha,17alpha-dihydroxy-5beta-androstane-11-one-17beta-carboxylate 3-O-(beta-D-glucuronate) + 3'-phosphoadenylyl sulfate = 3alpha,17alpha-dihydroxy-5beta-androstane-11-one-17beta-carboxylate 3-O-(3-sulfo-beta-D-glucuronate) + adenosine 3',5'-bisphosphate + H(+). It catalyses the reaction 3alpha-hydroxyetiocholan-17-one 3-O-(beta-D-glucuronate) + 3'-phosphoadenylyl sulfate = 3alpha-hydroxyetiocholan-17-one 3-O-(3-sulfo-beta-D-glucuronate) + adenosine 3',5'-bisphosphate + H(+). It participates in steroid metabolism. It functions in the pathway protein modification; carbohydrate sulfation. Functionally, catalyzes the transfer of sulfate from 3'-phosphoadenylyl sulfate (PAPS) to position 3 of terminal glucuronic acid of both protein- and lipid-linked oligosaccharides. Participates in biosynthesis of HNK-1 carbohydrate structure 3-O-sulfo-beta-D-GlcA-(1-&gt;3)-beta-D-Gal-(1-&gt;4)-D-GlcNAc-R, a sulfated glucuronyl-lactosaminyl residue carried by many neural recognition molecules, which is involved in cell interactions during ontogenetic development and in synaptic plasticity in the adult. May be indirectly involved in synapse plasticity of the hippocampus, via its role in HNK-1 biosynthesis. Sulfates terminal glucuronyl residue of the laminin globular (LG)-domain binding epitope on DAG1/alpha-dystroglycan and prevents further polymerization by LARGE1 glycosyltransferase. Likely defines the chain length of LG epitope, conferring binding specificity to extracellular matrix components. Plays a role in down-regulating the steroid hormones. Sulfates glucuronidated estrogens and androgens with an impact in hormone cycle and fertility. Has a preference for glucuronyl moiety at the 3-hydroxyl group of a sterol ring rather than the 17-hydroxyl group, showing high catalytic efficiency for 17beta-estradiol 3-O-(beta-D-glucuronate) and dehydroepiandrosterone 3-O-(beta-D-glucuronate) hormones. The sequence is that of Carbohydrate sulfotransferase 10 (CHST10) from Pongo abelii (Sumatran orangutan).